The following is a 557-amino-acid chain: Vacuolar protein sorting-associated protein 30 (557 aa).

2 disordered regions span residues 93–149 and 218–238; these read DDDN…ENQQ and NKEISESNKEKQYSHNLSEKE. Positions 135–147 are enriched in acidic residues; the sequence is DEEEQEATDEDEN. Threonine 142 bears the Phosphothreonine mark. The stretch at 189-322 forms a coiled coil; that stretch reads LINRLKSEYD…QLDKLRKINI (134 aa). Positions 320–539 are BARA; it reads INIFNATFKI…LAFSSNLLSK (220 aa). The segment at 515 to 540 is required for membrane-association, autophagic function during starvation and normal autophagosome morphology; that stretch reads WTTAMKFLLTNVKWLLAFSSNLLSKS.

Belongs to the beclin family. Component of the autophagy-specific VPS34 PI3-kinase complex I composed of VPS15, VPS30, VPS34, ATG14 and ATG38; and of the VPS34 PI3-kinase complex II composed of VPS15, VPS30, VPS34 and VPS38.

The protein localises to the endosome membrane. Its subcellular location is the vacuole membrane. It is found in the preautophagosomal structure membrane. Its function is as follows. Required for cytoplasm to vacuole transport (Cvt), autophagy, nucleophagy, and mitophagy, as a part of the autophagy-specific VPS34 PI3-kinase complex I. This complex is essential to recruit the ATG8-phosphatidylinositol conjugate and the ATG12-ATG5 conjugate to the pre-autophagosomal structure. Also involved in endosome-to-Golgi retrograde transport as part of the VPS34 PI3-kinase complex II. This second complex is required for the endosome-to-Golgi retrieval of PEP1 and KEX2, and the recruitment of VPS5 and VPS7, two components of the retromer complex, to endosomal membranes (probably through the synthesis of a specific pool of phosphatidylinositol 3-phosphate recruiting the retromer to the endosomes). Also plays a role in regulation of filamentous growth. This is Vacuolar protein sorting-associated protein 30 from Saccharomyces cerevisiae (strain ATCC 204508 / S288c) (Baker's yeast).